We begin with the raw amino-acid sequence, 590 residues long: MALNTFLHFPPCSLSSFSCAVPKLPLAIFHKTMARQIRCPRASSQTSEPALARRSANFQPTIWTNDFIQSLNSDYSSDVYVQRIEKLKKSVRQSLEEADGPLAQLELIDDLQRLGVGRLFEREINEMLNGIYMDYKETQAQWNLHFTSMYFRLLRARGFDVSPEIFSRFMDETGNFQTSISNDPIGMLSLYEASYLCMPGETTLDEAQAFTCKHLKYWKEKDVHPTIALQIEHALELPIHWRMPRLDSRWYIKLYEEKEGTRPLLLELAKLDFNMVQSAHQTELRKVSRWWSEFGLAEKASFARDRLMEGYQWAIGTVFEPEFGQCREVLAKLAQLIAVIDDMYDVYGSPDELELFTDAVDRWNINTIEGLPDYMKLCFLSIYNTTNQGGYEFLKDHGVDIIPHLRKAWADYCKALRTEARWVNSKYTPTLDEYLNNAYTSASGPLILIHAFFFSGQEPWKEAIDCFVSSNKDIIRLSATIFRLTDDLETSAEEIERGDVPKSIQCYMHEAGASEAVSRAHIRGKISEVWRKMNKYLTAPATRHKTFNAAAFNLARTSTCVYLYGDGYGVPNGKNKENITSLTVEPIVLE.

Residues 1–42 (MALNTFLHFPPCSLSSFSCAVPKLPLAIFHKTMARQIRCPRA) constitute a chloroplast transit peptide. Positions 304, 341, 345, 483, and 486 each coordinate (2E)-geranyl diphosphate. Residues Asp341 and Asp345 each contribute to the Mg(2+) site. Positions 341–345 (DDMYD) match the DDXXD motif motif. Residues Asp486, Thr490, and Glu494 each coordinate Mg(2+).

This sequence belongs to the terpene synthase family. Tpsb subfamily. As to quaternary structure, monomer. Mg(2+) is required as a cofactor.

Its subcellular location is the plastid. It localises to the chloroplast. The catalysed reaction is (2E)-geranyl diphosphate = beta-thujene + diphosphate. The enzyme catalyses (2E)-geranyl diphosphate = sabinene + diphosphate. It carries out the reaction (2E)-geranyl diphosphate = beta-pinene + diphosphate. It catalyses the reaction (2E)-geranyl diphosphate = alpha-terpinene + diphosphate. Its pathway is secondary metabolite biosynthesis; terpenoid biosynthesis. Monoterpene synthase involved in the biosynthesis of volatile organic compounds. Mediates the conversion of (2E)-geranyl diphosphate (GPP) into beta-thujene, sabinene, beta-pinene and alpha-terpinene. Does not use (2E,6E)-farnesyl diphosphate (FPP) as substrate. The polypeptide is Monoterepene synthase TPS1, chloropastic (Cananga odorata (Ylang-ylang tree)).